The sequence spans 129 residues: Nif-specific regulatory protein (129 aa).

One can recognise a Sigma-54 factor interaction domain in the interval 1–46 (EFLLTKIGRQQGRPLTVTDSAIRLLMSHRWPGNVRDVENCLERSAI). The H-T-H motif DNA-binding region spans 101 to 129 (QAKAARLLGMTPRQIAYRIQTLNIHMRKI).

As to quaternary structure, interacts with sigma-54.

Functionally, required for activation of most nif operons, which are directly involved in nitrogen fixation. This Azotobacter chroococcum mcd 1 protein is Nif-specific regulatory protein (nifA).